The primary structure comprises 266 residues: Glucosamine-6-phosphate deaminase (266 aa).

D72 serves as the catalytic Proton acceptor; for enolization step. Catalysis depends on D141, which acts as the For ring-opening step. The Proton acceptor; for ring-opening step role is filled by H143. E148 acts as the For ring-opening step in catalysis.

This sequence belongs to the glucosamine/galactosamine-6-phosphate isomerase family. NagB subfamily. As to quaternary structure, homohexamer.

The catalysed reaction is alpha-D-glucosamine 6-phosphate + H2O = beta-D-fructose 6-phosphate + NH4(+). The protein operates within amino-sugar metabolism; N-acetylneuraminate degradation; D-fructose 6-phosphate from N-acetylneuraminate: step 5/5. Its activity is regulated as follows. Allosterically activated by N-acetylglucosamine 6-phosphate (GlcNAc6P). Its function is as follows. Catalyzes the reversible isomerization-deamination of glucosamine 6-phosphate (GlcN6P) to form fructose 6-phosphate (Fru6P) and ammonium ion. This is Glucosamine-6-phosphate deaminase from Klebsiella pneumoniae subsp. pneumoniae (strain ATCC 700721 / MGH 78578).